Reading from the N-terminus, the 311-residue chain is Methionyl-tRNA formyltransferase (311 aa).

109-112 (SLLP) lines the (6S)-5,6,7,8-tetrahydrofolate pocket.

The protein belongs to the Fmt family.

It carries out the reaction L-methionyl-tRNA(fMet) + (6R)-10-formyltetrahydrofolate = N-formyl-L-methionyl-tRNA(fMet) + (6S)-5,6,7,8-tetrahydrofolate + H(+). Functionally, attaches a formyl group to the free amino group of methionyl-tRNA(fMet). The formyl group appears to play a dual role in the initiator identity of N-formylmethionyl-tRNA by promoting its recognition by IF2 and preventing the misappropriation of this tRNA by the elongation apparatus. The chain is Methionyl-tRNA formyltransferase from Staphylococcus aureus (strain MW2).